Consider the following 438-residue polypeptide: Gamma-glutamyl phosphate reductase (438 aa).

It belongs to the gamma-glutamyl phosphate reductase family.

It is found in the cytoplasm. The catalysed reaction is L-glutamate 5-semialdehyde + phosphate + NADP(+) = L-glutamyl 5-phosphate + NADPH + H(+). Its pathway is amino-acid biosynthesis; L-proline biosynthesis; L-glutamate 5-semialdehyde from L-glutamate: step 2/2. Functionally, catalyzes the NADPH-dependent reduction of L-glutamate 5-phosphate into L-glutamate 5-semialdehyde and phosphate. The product spontaneously undergoes cyclization to form 1-pyrroline-5-carboxylate. This chain is Gamma-glutamyl phosphate reductase, found in Prochlorococcus marinus (strain NATL2A).